The primary structure comprises 111 residues: Wound-induced proteinase inhibitor 1 (111 aa).

Positions 1-23 (MEAKFAHIILFFLLAFSFETLMA) are cleaved as a signal peptide. The propeptide occupies 24 to 36 (RKESDGPEVIKLL).

It belongs to the protease inhibitor I13 (potato type I serine protease inhibitor) family.

The protein resides in the secreted. This is Wound-induced proteinase inhibitor 1 from Solanum peruvianum (Peruvian tomato).